The following is a 444-amino-acid chain: Phosphoglucosamine mutase (444 aa).

Ser102 (phosphoserine intermediate) is an active-site residue. Residues Ser102, Asp241, Asp243, and Asp245 each coordinate Mg(2+). Ser102 is subject to Phosphoserine.

It belongs to the phosphohexose mutase family. Mg(2+) serves as cofactor. In terms of processing, activated by phosphorylation.

The catalysed reaction is alpha-D-glucosamine 1-phosphate = D-glucosamine 6-phosphate. Functionally, catalyzes the conversion of glucosamine-6-phosphate to glucosamine-1-phosphate. The polypeptide is Phosphoglucosamine mutase (Histophilus somni (strain 129Pt) (Haemophilus somnus)).